The chain runs to 754 residues: Phosphatase and actin regulator 4B (754 aa).

The span at 1-12 shows a compositional bias: basic and acidic residues; that stretch reads MENRDDEVEHQH. 4 disordered regions span residues 1 to 38, 83 to 105, 120 to 625, and 637 to 666; these read MENRDDEVEHQHSTMGSEGGTAGDGTPPPKRKGKFSTL, KELPDNESGEAHGHKAPYVKNGH, VHSP…SKEQ, and LTRRLSQRPTAEELEQRNILQPKNEADRQA. Residues 61 to 86 form an RPEL 1 repeat; the sequence is EVLERKMSMRRPRQELIEQGVLKELP. Composition is skewed to basic and acidic residues over residues 138-153, 184-221, and 229-241; these read PEDRRARAPSDGDHRG, HGEDIRRGGRAHAEMDKRPGLMKAPSEDGRRTRPEPDW, and SSVEEGRGRRESD. Low complexity-rich tracts occupy residues 296–307 and 316–333; these read SFCSSNSSSSSS and SSAGANTAPPGGAPLTTS. Composition is skewed to pro residues over residues 348–357, 381–390, 427–445, and 460–478; these read KQPPMPPPKP, KPSPPMPPKR, LPPPPPSPPLPTHIPPSPP, and YPLPQPLPVHFDPPSPPED. Composition is skewed to acidic residues over residues 483 to 503, 541 to 557, and 566 to 576; these read DEDDYSDEEEEEEDDEDDEEP, SEEEEDEEDQHPEESDS, and DESDEDEEDDS. Basic and acidic residues predominate over residues 605–615; the sequence is QAPERQAKSEH. RPEL repeat units lie at residues 635–660 and 673–698; these read TALTRRLSQRPTAEELEQRNILQPKN and RRLTRKLSQRPTVAELQARKILRFHE. Position 642 is a phosphoserine (S642).

It belongs to the phosphatase and actin regulator family. Binds ppp1ca and actin.

It localises to the cytoplasm. Its subcellular location is the cell projection. It is found in the lamellipodium. Functionally, regulator of protein phosphatase 1 (PP1) required for neural tube and optic fissure closure, and enteric neural crest cell (ENCCs) migration during development. Acts as an activator of PP1. During neural tube closure, localizes to the ventral neural tube and activates PP1, leading to down-regulate cell proliferation within cranial neural tissue and the neural retina. Also acts as a regulator of migration of enteric neural crest cells (ENCCs) by activating PP1, leading to repression of the integrin signaling through the rho/rock pathway. In Danio rerio (Zebrafish), this protein is Phosphatase and actin regulator 4B (phactr4b).